We begin with the raw amino-acid sequence, 603 residues long: Sesquiterpene synthase Cad (603 aa).

Over residues 1 to 13 (MAEVGLSQNSYAS) the composition is skewed to polar residues. The interval 1–23 (MAEVGLSQNSYASANHDKKSEQQ) is disordered. Mg(2+) is bound by residues Asp357, Asp361, Asp498, and Glu506. The short motif at 357-361 (DDIFD) is the DDXXD motif element.

It belongs to the terpene synthase family. Tpsa subfamily. It depends on Mg(2+) as a cofactor. Requires Mn(2+) as cofactor. As to expression, mostly expressed in leaves and, to a lower extent, in stems and xylem.

The catalysed reaction is (2E,6E)-farnesyl diphosphate = beta-cadinene + diphosphate. It participates in secondary metabolite biosynthesis; terpenoid biosynthesis. In terms of biological role, sesquiterpene synthase involved in the biosynthesis of volatile compounds. Mediates the conversion of (2E,6E)-farnesyl diphosphate (FPP) into beta-cadinene. Not active with geranyl diphosphate (GPP) and geranylgeranyl diphosphate (GGPP) as substrates. The sequence is that of Sesquiterpene synthase Cad from Chamaecyparis formosensis (Formosan cypress).